The sequence spans 132 residues: Ribosome-binding factor A (132 aa).

It belongs to the RbfA family. In terms of assembly, monomer. Binds 30S ribosomal subunits, but not 50S ribosomal subunits or 70S ribosomes.

It is found in the cytoplasm. In terms of biological role, one of several proteins that assist in the late maturation steps of the functional core of the 30S ribosomal subunit. Associates with free 30S ribosomal subunits (but not with 30S subunits that are part of 70S ribosomes or polysomes). Required for efficient processing of 16S rRNA. May interact with the 5'-terminal helix region of 16S rRNA. This chain is Ribosome-binding factor A, found in Burkholderia cenocepacia (strain ATCC BAA-245 / DSM 16553 / LMG 16656 / NCTC 13227 / J2315 / CF5610) (Burkholderia cepacia (strain J2315)).